The sequence spans 624 residues: Chaperone protein HtpG (624 aa).

An a; substrate-binding region spans residues 1 to 336; that stretch reads MKGQETRGFQ…SNDLPLNVSR (336 aa). Residues 337-552 are b; the sequence is EILQDSTVTR…ADEMGTQMAK (216 aa). Residues 553–624 are c; the sequence is LFAAAGQAMP…IKRVNALLLG (72 aa).

The protein belongs to the heat shock protein 90 family. In terms of assembly, homodimer.

The protein resides in the cytoplasm. Its function is as follows. Molecular chaperone. Has ATPase activity. The sequence is that of Chaperone protein HtpG from Enterobacter sp. (strain 638).